The following is a 323-amino-acid chain: tRNA U34 carboxymethyltransferase (323 aa).

Carboxy-S-adenosyl-L-methionine-binding positions include Lys91, Trp105, Lys110, Gly130, 180-181 (IE), Met196, Tyr200, and Arg315.

It belongs to the class I-like SAM-binding methyltransferase superfamily. CmoB family. Homotetramer.

The catalysed reaction is carboxy-S-adenosyl-L-methionine + 5-hydroxyuridine(34) in tRNA = 5-carboxymethoxyuridine(34) in tRNA + S-adenosyl-L-homocysteine + H(+). Functionally, catalyzes carboxymethyl transfer from carboxy-S-adenosyl-L-methionine (Cx-SAM) to 5-hydroxyuridine (ho5U) to form 5-carboxymethoxyuridine (cmo5U) at position 34 in tRNAs. This chain is tRNA U34 carboxymethyltransferase, found in Geobacter sp. (strain M21).